Here is a 664-residue protein sequence, read N- to C-terminus: DNA mismatch repair protein MutL (664 aa).

Positions 382 to 447 are disordered; sequence RKAGQEQQLQ…YGEPAPSKQQ (66 aa). The span at 427 to 436 shows a compositional bias: polar residues; it reads RHTTSSNQSE.

It belongs to the DNA mismatch repair MutL/HexB family.

This protein is involved in the repair of mismatches in DNA. It is required for dam-dependent methyl-directed DNA mismatch repair. May act as a 'molecular matchmaker', a protein that promotes the formation of a stable complex between two or more DNA-binding proteins in an ATP-dependent manner without itself being part of a final effector complex. This is DNA mismatch repair protein MutL from Vibrio vulnificus (strain CMCP6).